A 351-amino-acid chain; its full sequence is Divinyl chlorophyll a/b light-harvesting protein PcbC (351 aa).

The next 6 helical transmembrane spans lie at Phe27 to Leu47, Gly81 to Val101, Phe140 to Ala160, Val202 to Ala222, Ala242 to Cys262, and Leu309 to Leu329.

Belongs to the PsbB/PsbC family. IsiA/Pcb subfamily. The antenna complex consists of divinyl chlorophylls (a and b) and divinyl chlorophyll a/b binding proteins and binds more divinyl chlorophyll b than does the antenna complex from high-light-adapted Prochlorococcus. Divinyl chlorophyll a is required as a cofactor. It depends on divinyl chlorophyll b as a cofactor.

Its subcellular location is the cellular thylakoid membrane. Its function is as follows. The antenna complex functions as a light receptor, it captures and delivers excitation energy to photosystems II and I. The Prochlorales pcb genes are not related to higher plant LHCs. The protein is Divinyl chlorophyll a/b light-harvesting protein PcbC (pcbC) of Prochlorococcus marinus (strain NATL2A).